A 395-amino-acid polypeptide reads, in one-letter code: MLRFLTAGESHGPGLTIIVEGIPADLPLLAEDIDRDLARRQVGFGRGGRMSIETDRVTFRGGVRLGRTIGSPIAMTLENRDFKNWEVPMSVSPVDLDDEAVRAQLEAKRITRLRPGHADYPGAVKYGLADVRNILERSSARETASRVAAGAIAKQLLRQFNVHVHSHVVEIGGVGAGESVRPALPTFEEWKDLFERVDQNDLRCHPDLYERLRSRVVEAAKGGYTLGGAVELAAYGEIPVGLGSHVHYDRRIDGLLAGAAMSVHTVKAVEVGIGTAAARETGADVQDEFINAAGEIARTSNHAGGIEGGMTNGQPVLLRAYLKPLPTMRKALRSIDLVSREPFEAHYERSDTCAVPAGGVVCEAMMAIVLAQELQRKLGGDSLGEMLRHAGRTHA.

Residues arginine 40 and arginine 46 each coordinate NADP(+). Residues 137 to 139 (RSS), glycine 308, 323 to 327 (KPLPT), and arginine 349 each bind FMN.

Belongs to the chorismate synthase family. Homotetramer. The cofactor is FMNH2.

The catalysed reaction is 5-O-(1-carboxyvinyl)-3-phosphoshikimate = chorismate + phosphate. The protein operates within metabolic intermediate biosynthesis; chorismate biosynthesis; chorismate from D-erythrose 4-phosphate and phosphoenolpyruvate: step 7/7. Functionally, catalyzes the anti-1,4-elimination of the C-3 phosphate and the C-6 proR hydrogen from 5-enolpyruvylshikimate-3-phosphate (EPSP) to yield chorismate, which is the branch point compound that serves as the starting substrate for the three terminal pathways of aromatic amino acid biosynthesis. This reaction introduces a second double bond into the aromatic ring system. The sequence is that of Chorismate synthase from Gloeobacter violaceus (strain ATCC 29082 / PCC 7421).